Here is a 64-residue protein sequence, read N- to C-terminus: Conotoxin Pu3.4 (64 aa).

The signal sequence occupies residues 1 to 16 (LGVLLPICLLLFPLTA). Residues 17-49 (LPLDGDQPADRPAERMQDDFITEQHPLFDPVKR) constitute a propeptide that is removed on maturation. 3 disulfides stabilise this stretch: cysteine 50/cysteine 63, cysteine 51/cysteine 59, and cysteine 55/cysteine 62. Position 61 is a 4-hydroxyproline (proline 61).

It belongs to the conotoxin M superfamily. In terms of tissue distribution, expressed by the venom duct.

The protein localises to the secreted. The polypeptide is Conotoxin Pu3.4 (Conus pulicarius (Flea-bitten cone)).